The primary structure comprises 589 residues: Intermediate filament protein B (589 aa).

A head region spans residues 1–84; the sequence is SLKQSQESSE…LEATDKEKKE (84 aa). One can recognise an IF rod domain in the interval 81–433; it reads EKKEMQGLND…KMLEGEESRV (353 aa). The tract at residues 85–116 is coil 1A; sequence MQGLNDRLGNYIDRVKKLEEQNRKLVADLDEL. Residues 117–130 are linker 1; that stretch reads RGRWGKDTSEIKIQ. Residues 131–268 form a coil 1B region; sequence YSDSLRDARK…RVHEQEVKEL (138 aa). Positions 269 to 285 are linker 12; sequence QALLAQAPADTREFFKN. Residues 286–433 are coil 2; it reads ELALAIRDIK…KMLEGEESRV (148 aa). The segment at 434-589 is tail; sequence GLRQMVEQVV…HTQKTIQTGQ (156 aa). Residues 446 to 470 form a disordered region; the sequence is HSLQQQEDTDSTRNVRGEVSTKTTF. An LTD domain is found at 466-584; the sequence is TKTTFQRSAK…DERATHTQKT (119 aa).

It belongs to the intermediate filament family. An and B can form homopolymers. In terms of tissue distribution, giant body muscle cells.

Its subcellular location is the cytoplasm. This Ascaris suum (Pig roundworm) protein is Intermediate filament protein B.